The following is a 542-amino-acid chain: 1-aminocyclopropane-1-carboxylate synthase 6 (542 aa).

The disordered stretch occupies residues 1–28 (MRRSGNGGAAKKKKKRSASAASERRPRA). The residue at position 379 (Lys379) is an N6-(pyridoxal phosphate)lysine.

This sequence belongs to the class-I pyridoxal-phosphate-dependent aminotransferase family. Requires pyridoxal 5'-phosphate as cofactor. In terms of tissue distribution, expressed in leaves.

The protein resides in the plastid. It is found in the amyloplast membrane. The enzyme catalyses S-adenosyl-L-methionine = 1-aminocyclopropane-1-carboxylate + S-methyl-5'-thioadenosine + H(+). It functions in the pathway alkene biosynthesis; ethylene biosynthesis via S-adenosyl-L-methionine; ethylene from S-adenosyl-L-methionine: step 1/2. Catalyzes the formation of 1-aminocyclopropane-1-carboxylate, a direct precursor of ethylene in higher plants. Required for the regulation of starch grain size in endosperm. The polypeptide is 1-aminocyclopropane-1-carboxylate synthase 6 (Oryza sativa subsp. japonica (Rice)).